The primary structure comprises 360 residues: NADP-dependent alcohol dehydrogenase 6 (360 aa).

Zn(2+) is bound at residue Cys46. 2 residues coordinate NADP(+): Gly47 and His51. Zn(2+) contacts are provided by His68, Cys100, Cys103, Cys106, and Cys114. The residue at position 131 (Ser131) is a Phosphoserine. Cys163 is a Zn(2+) binding site. NADP(+) contacts are provided by Leu188, Gly190, Ile191, Ser210, Arg211, Lys215, Cys250, Ser252, Thr255, Asp256, Ile275, Ile277, Tyr298, Ser299, Leu301, and Arg348. Phosphoserine is present on Ser359.

The protein belongs to the zinc-containing alcohol dehydrogenase family. Homodimer. Zn(2+) serves as cofactor.

The protein resides in the cytoplasm. It is found in the nucleus. The enzyme catalyses a primary alcohol + NADP(+) = an aldehyde + NADPH + H(+). It catalyses the reaction (E)-cinnamyl alcohol + NADP(+) = (E)-cinnamaldehyde + NADPH + H(+). It carries out the reaction hexan-1-ol + NADP(+) = hexanal + NADPH + H(+). The catalysed reaction is 3-methylbutanol + NADP(+) = 3-methylbutanal + NADPH + H(+). The enzyme catalyses S-nitroso-CoA + NADPH + H(+) = sulfinamide-CoA + NADP(+). NADP-dependent, medium-chain alcohol dehydrogenase with a broad substrate specificity. Aldehydes exhibited 50-12000 times higher catalytic efficiency than the corresponding alcohols, therefore the major function of the enzyme is as an aldehyde reductase. The enzyme is active towards aromatic and aliphatic (linear and branched-chain) aldehydes. The enzyme is very active towards aromatic aldehydes, such as cinnamaldehyde, benzaldehyde and substituted benzaldehydes, such as veratraldehyde and panisaldehyde. It exhibits low activity towards substituted cinnamaldehydes, such as coniferaldehyde and sinapaldehyde. The enzyme has no activity with ketones, such as acetone or cyclohexanone. For the reverse reaction, linear and branched-chain primary alcohols are substrates, whereas very low activity is found with secondary alcohols, such as butan-2-ol. The enzyme may be physiologically involved in several steps of the lignin degradation pathway, initiated by other microorganisms, in the synthesis of fusel alcohols, products derived from the aminoacidic metabolism, and in the homeostasis of NADP(H). Has the ability to reduce 5-hydroxymethyl furfural (HMF), a furan derivative which is formed during the hydrolysis of lignocellulosic materials, to 5-hydroxymethylfurfuryl alcohol, thereby alleviating the inhibition of the fermentation of lignocellulose hydrolysates by HMF during fuel ethanol production. Also acts as an inhibitor of protein S-nitrosylation by mediating degradation of S-nitroso-coenzyme A (S-nitroso-CoA), a cofactor required to S-nitrosylate proteins. This chain is NADP-dependent alcohol dehydrogenase 6, found in Saccharomyces cerevisiae (strain ATCC 204508 / S288c) (Baker's yeast).